A 1306-amino-acid chain; its full sequence is Activating transcription factor 7-interacting protein 1 (1306 aa).

An N-acetylmethionine modification is found at M1. The segment at 1–23 (MDSVEEPQKKVFKARKTMRASDR) is disordered. A Glycyl lysine isopeptide (Lys-Gly) (interchain with G-Cter in SUMO2) cross-link involves residue K33. Residues S57 and S112 each carry the phosphoserine modification. Disordered regions lie at residues 104 to 470 (EDLN…SMET), 496 to 604 (LPVE…SKRR), 689 to 722 (AAKD…NNMT), 765 to 785 (VVSS…PAAP), 871 to 895 (PLPN…NSST), 920 to 1060 (RTSL…GPSQ), and 1152 to 1196 (AGPQ…STSL). 2 stretches are compositionally biased toward polar residues: residues 109-134 (EALS…SPAS) and 143-162 (VSDN…SDNP). T124 is subject to Phosphothreonine. Composition is skewed to low complexity over residues 185-212 (EEPP…CSEP), 246-261 (EAAS…ASDE), and 284-303 (PSGD…LPRS). Residues 432–441 (QSEKDEHKSP) are compositionally biased toward basic and acidic residues. 4 positions are modified to phosphoserine: S511, S514, S516, and S533. Over residues 513 to 523 (GSPSKQESSEN) the composition is skewed to polar residues. Composition is skewed to basic and acidic residues over residues 557-566 (EGEKSEKDGK), 592-601 (KSEDMDSVES), and 689-699 (AAKDDLKKRQE). The short motif at 587–605 (RRKRSKSEDMDSVESKRRR) is the Nuclear localization signal element. K592 participates in a covalent cross-link: Glycyl lysine isopeptide (Lys-Gly) (interchain with G-Cter in SUMO2). S593 carries the phosphoserine modification. An interaction with SETDB1 region spans residues 596-851 (MDSVESKRRR…NQPSGNVEFI (256 aa)). The stretch at 666–696 (NKRHKAVLTELQAKIARLTKRFGAAKDDLKK) forms a coiled coil. Residues S700 and S707 each carry the phosphoserine modification. Positions 713 to 722 (NDTNSNNNMT) are enriched in polar residues. A compositionally biased stretch (pro residues) spans 871-884 (PLPNPTKPNIPSVP). At S933 the chain carries Phosphoserine. Glycyl lysine isopeptide (Lys-Gly) (interchain with G-Cter in SUMO2) cross-links involve residues K944 and K974. Residues 948–981 (STFSPPSSAEQNSSATPRIVTENQTNKTVDSSIN) are compositionally biased toward polar residues. Residues 987–1000 (STSQSGKASSSDSS) are compositionally biased toward low complexity. Residues 1001–1011 (GVIDLTMDDEE) form an interaction with SUMO region. A compositionally biased stretch (low complexity) spans 1022–1040 (SPPSSSTVSTSQPMSRPLQ). The Fibronectin type-III 1 domain occupies 1054–1143 (PTSGPSQATI…RVPQTTTYVV (90 aa)). A compositionally biased stretch (pro residues) spans 1170-1187 (PRPLHPAPLPEAPQPQRL). Residues 1190–1306 (EAASTSLPQK…TDVISSSQNS (117 aa)) form an interaction with MBD1 region. In terms of domain architecture, Fibronectin type-III 2 spans 1196–1302 (LPQKPHLKLA…DPQSTDVISS (107 aa)).

Belongs to the MCAF family. As to quaternary structure, interacts with MBD1; the interaction is enhanced when MBD1 is sumoylated. Interacts with SETDB1; the interaction protects SETDB1 from proteasomal degradation and is required to stimulate histone methyltransferase activity and facilitate the conversion of dimethylated to trimethylated H3 'Lys-9'. Interacts with SUMO ubiquitin-like proteins (SUMO1, SUNO2 and SUMO3), with a preference for SUMO2 and SUMO3. Interacts with SP1, ATF7 and ZHX1. Interacts with the general transcription machinery, including ERCC2, ERCC3, GTF2E1, GTF2E2 and POLR2A. Ubiquitously expressed at all stages studied.

Its subcellular location is the nucleus. Its function is as follows. Recruiter that couples transcriptional factors to general transcription apparatus and thereby modulates transcription regulation and chromatin formation. Can both act as an activator or a repressor depending on the context. Required for HUSH-mediated heterochromatin formation and gene silencing. Mediates MBD1-dependent transcriptional repression, probably by recruiting complexes containing SETDB1. Stabilizes SETDB1, is required to stimulate histone methyltransferase activity of SETDB1 and facilitates the conversion of dimethylated to trimethylated H3 'Lys-9' (H3K9me3). The complex formed with MBD1 and SETDB1 represses transcription and couples DNA methylation and histone H3 'Lys-9' trimethylation (H3K9me3). Facilitates telomerase TERT and TERC gene expression by SP1 in cancer cells. In Mus musculus (Mouse), this protein is Activating transcription factor 7-interacting protein 1 (Atf7ip).